The chain runs to 252 residues: 5-oxoprolinase subunit A 1 (252 aa).

The protein belongs to the LamB/PxpA family. In terms of assembly, forms a complex composed of PxpA, PxpB and PxpC.

It carries out the reaction 5-oxo-L-proline + ATP + 2 H2O = L-glutamate + ADP + phosphate + H(+). Its function is as follows. Catalyzes the cleavage of 5-oxoproline to form L-glutamate coupled to the hydrolysis of ATP to ADP and inorganic phosphate. The protein is 5-oxoprolinase subunit A 1 of Bordetella bronchiseptica (strain ATCC BAA-588 / NCTC 13252 / RB50) (Alcaligenes bronchisepticus).